The following is a 39-amino-acid chain: Pro-opiomelanocortin (39 aa).

Residue serine 1 is modified to N-acetylserine. A Valine amide modification is found at valine 13. A Phosphoserine modification is found at serine 31.

It belongs to the POMC family. In terms of tissue distribution, expressed in the pituitary gland.

It is found in the secreted. Precursor protein for pituitary hormones that regulate stress and environmental adaptation. In terms of biological role, stimulates the adrenal glands to release cortisol. Functionally, anorexigenic peptide. Increases the pigmentation of skin by increasing melanin production in melanocytes. The sequence is that of Pro-opiomelanocortin (POMC) from Oryctolagus cuniculus (Rabbit).